We begin with the raw amino-acid sequence, 486 residues long: Transcriptional adapter 2-beta (486 aa).

The ZZ-type zinc finger occupies 4–59 (LGKKYCVNCLADVTNLRIRCAECQDIELCPECFSAGAEIGNHRRWHGYQQVDGGRF). Residues Cys-9, Cys-12, Cys-23, Cys-26, Cys-32, Cys-35, His-45, and His-49 each contribute to the Zn(2+) site. One can recognise an SANT domain in the interval 65–118 (EAEGGWTSREEQSLLDAIEQYGFGNWEDMAAHVGASRTPQEVMDHYVSMYIHGN). Disordered regions lie at residues 237 to 291 (KKDK…EKGQ) and 343 to 377 (EYEA…TAGL). 2 stretches are compositionally biased toward gly residues: residues 247-262 (GTVG…GSGS) and 367-377 (SSGGGGGTAGL).

It localises to the nucleus. Functionally, transcriptional coactivator. The polypeptide is Transcriptional adapter 2-beta (tada2b) (Danio rerio (Zebrafish)).